Here is a 179-residue protein sequence, read N- to C-terminus: Inner membrane-spanning protein YciB (179 aa).

5 consecutive transmembrane segments (helical) span residues 22 to 42 (IYAA…YSWV), 50 to 70 (MALI…FFHN), 76 to 96 (WKVT…QWVM), 121 to 141 (LAWA…AFWL), and 149 to 169 (FKVF…GIYI).

This sequence belongs to the YciB family.

It localises to the cell inner membrane. Functionally, plays a role in cell envelope biogenesis, maintenance of cell envelope integrity and membrane homeostasis. The chain is Inner membrane-spanning protein YciB from Shigella boydii serotype 18 (strain CDC 3083-94 / BS512).